The chain runs to 905 residues: DNA gyrase subunit A (905 aa).

Residues 35 to 524 (IPDVRDGLKP…GEFDQDIEDL (490 aa)) enclose the Topo IIA-type catalytic domain. Tyrosine 123 (O-(5'-phospho-DNA)-tyrosine intermediate) is an active-site residue. The GyrA-box motif lies at 551-557 (QKRGGKG). The tract at residues 882-905 (IAESSDDNEEDSEFEEEVAEEGSE) is disordered. The span at 885-905 (SSDDNEEDSEFEEEVAEEGSE) shows a compositional bias: acidic residues.

Belongs to the type II topoisomerase GyrA/ParC subunit family. In terms of assembly, heterotetramer, composed of two GyrA and two GyrB chains. In the heterotetramer, GyrA contains the active site tyrosine that forms a transient covalent intermediate with DNA, while GyrB binds cofactors and catalyzes ATP hydrolysis.

It is found in the cytoplasm. The catalysed reaction is ATP-dependent breakage, passage and rejoining of double-stranded DNA.. Functionally, a type II topoisomerase that negatively supercoils closed circular double-stranded (ds) DNA in an ATP-dependent manner to modulate DNA topology and maintain chromosomes in an underwound state. Negative supercoiling favors strand separation, and DNA replication, transcription, recombination and repair, all of which involve strand separation. Also able to catalyze the interconversion of other topological isomers of dsDNA rings, including catenanes and knotted rings. Type II topoisomerases break and join 2 DNA strands simultaneously in an ATP-dependent manner. This chain is DNA gyrase subunit A, found in Rickettsia bellii (strain RML369-C).